The chain runs to 189 residues: Small ribosomal subunit protein uS5 (189 aa).

An S5 DRBM domain is found at 22-85 (FVDKLVAINR…EAAKRELIFV (64 aa)).

Belongs to the universal ribosomal protein uS5 family. Part of the 30S ribosomal subunit. Contacts proteins S4 and S8.

With S4 and S12 plays an important role in translational accuracy. In terms of biological role, located at the back of the 30S subunit body where it stabilizes the conformation of the head with respect to the body. The polypeptide is Small ribosomal subunit protein uS5 (Rhizobium etli (strain CIAT 652)).